The chain runs to 165 residues: UPF0303 protein Bphy_1660 (165 aa).

The protein belongs to the UPF0303 family.

The polypeptide is UPF0303 protein Bphy_1660 (Paraburkholderia phymatum (strain DSM 17167 / CIP 108236 / LMG 21445 / STM815) (Burkholderia phymatum)).